The chain runs to 434 residues: Nicotinate phosphoribosyltransferase (434 aa).

Position 242 is a phosphohistidine; by autocatalysis (H242).

The protein belongs to the NAPRTase family. In terms of processing, transiently phosphorylated on a His residue during the reaction cycle. Phosphorylation strongly increases the affinity for substrates and increases the rate of nicotinate D-ribonucleotide production. Dephosphorylation regenerates the low-affinity form of the enzyme, leading to product release.

It carries out the reaction nicotinate + 5-phospho-alpha-D-ribose 1-diphosphate + ATP + H2O = nicotinate beta-D-ribonucleotide + ADP + phosphate + diphosphate. It functions in the pathway cofactor biosynthesis; NAD(+) biosynthesis; nicotinate D-ribonucleotide from nicotinate: step 1/1. In terms of biological role, catalyzes the synthesis of beta-nicotinate D-ribonucleotide from nicotinate and 5-phospho-D-ribose 1-phosphate at the expense of ATP. This is Nicotinate phosphoribosyltransferase from Sinorhizobium fredii (strain NBRC 101917 / NGR234).